Here is a 1854-residue protein sequence, read N- to C-terminus: Protein virilizer (1854 aa).

A Phosphoserine modification is found at Ser-186. Basic and acidic residues-rich tracts occupy residues 202–214 and 236–259; these read YHQH…QREM and THSE…DWSR. Disordered regions lie at residues 202 to 361, 777 to 821, 1570 to 1589, 1720 to 1788, and 1804 to 1854; these read YHQH…EIIG, NPEE…GKPV, TSTE…ASSC, VRGR…NRGS, and IGSP…SYLR. Ser-258, Ser-260, and Ser-276 each carry phosphoserine. Over residues 275 to 285 the composition is skewed to basic and acidic residues; the sequence is RSRSVVDEHKW. The residue at position 288 (Thr-288) is a Phosphothreonine. Phosphoserine is present on Ser-295. Thr-297 carries the post-translational modification Phosphothreonine. Phosphoserine is present on residues Ser-301 and Ser-312. Basic and acidic residues-rich tracts occupy residues 325–343 and 777–796; these read HSSE…EDRS and NPEE…KAME. A coiled-coil region spans residues 779-808; the sequence is EEKEEKAEKSDAEDKAMEVENEAVEAGGEK. Composition is skewed to low complexity over residues 1738–1748 and 1816–1838; these read SRPPNTSRPPS and SYRS…PHYS.

This sequence belongs to the vir family. Component of the WMM complex, a N6-methyltransferase complex composed of a catalytic subcomplex, named MAC, and of an associated subcomplex, named MACOM. The MAC subcomplex is composed of Ime4/Mettl3 and Mettl14. The MACOM subcomplex is composed of fl(2)d, Flacc/Xio, Hakai, vir, and, in some cases of nito. Part of a complex containing fl(2)d, Sxl and vir.

It is found in the nucleus. In terms of biological role, associated component of the WMM complex, a complex that mediates N6-methyladenosine (m6A) methylation of mRNAs, a modification that plays a role in the efficiency of mRNA splicing and is required for sex determination. Required for sex determination and dosage compensation via Sxl alternative splicing: m6A methylation acts as a key regulator of Sxl pre-mRNA and promotes female-specific alternative splicing of Sxl, which determines female physiognomy. M6A methylation is also required for neuronal functions. Required for proper inclusion of regulated exons in Ubx transcripts, leading to isoforms Ia/b and IIa/b. This chain is Protein virilizer, found in Drosophila melanogaster (Fruit fly).